Consider the following 319-residue polypeptide: Acetyl-coenzyme A carboxylase carboxyl transferase subunit beta (319 aa).

The 270-residue stretch at 24–293 folds into the CoA carboxyltransferase N-terminal domain; sequence LWIKCPDTGQ…MIEQEPEPSA (270 aa). The tract at residues 282-319 is disordered; sequence PEMIEQEPEPSAPVPPDEPDEPAATQEAPPAAPAAPPA.

This sequence belongs to the AccD/PCCB family. Acetyl-CoA carboxylase is a heterohexamer composed of biotin carboxyl carrier protein (AccB), biotin carboxylase (AccC) and two subunits each of ACCase subunit alpha (AccA) and ACCase subunit beta (AccD).

The protein resides in the cytoplasm. It catalyses the reaction N(6)-carboxybiotinyl-L-lysyl-[protein] + acetyl-CoA = N(6)-biotinyl-L-lysyl-[protein] + malonyl-CoA. It participates in lipid metabolism; malonyl-CoA biosynthesis; malonyl-CoA from acetyl-CoA: step 1/1. Component of the acetyl coenzyme A carboxylase (ACC) complex. Biotin carboxylase (BC) catalyzes the carboxylation of biotin on its carrier protein (BCCP) and then the CO(2) group is transferred by the transcarboxylase to acetyl-CoA to form malonyl-CoA. The chain is Acetyl-coenzyme A carboxylase carboxyl transferase subunit beta from Nitrobacter winogradskyi (strain ATCC 25391 / DSM 10237 / CIP 104748 / NCIMB 11846 / Nb-255).